The primary structure comprises 487 residues: Probable Xaa-Pro aminopeptidase AFUB_014460 (487 aa).

Mn(2+) contacts are provided by D267, D278, E416, and E455.

It belongs to the peptidase M24B family. Requires Mn(2+) as cofactor.

The catalysed reaction is Release of any N-terminal amino acid, including proline, that is linked to proline, even from a dipeptide or tripeptide.. Its function is as follows. Catalyzes the removal of a penultimate prolyl residue from the N-termini of peptides. The polypeptide is Probable Xaa-Pro aminopeptidase AFUB_014460 (Aspergillus fumigatus (strain CBS 144.89 / FGSC A1163 / CEA10) (Neosartorya fumigata)).